A 241-amino-acid chain; its full sequence is Regulatory protein VirG (241 aa).

One can recognise a Response regulatory domain in the interval 3 to 117 (HVLVIDDDVA…EFLARIRVAL (115 aa)). A 4-aspartylphosphate modification is found at D52. The ompR/PhoB-type DNA-binding region spans 129 to 229 (RRSFYFADWT…ARGAGYFFDA (101 aa)).

Phosphorylated by wide host range (WHR) VirA protein.

It localises to the cytoplasm. Functionally, virG is required for the positive regulation of at least two vir loci encoded by the Ri plasmid of A.rhizogenes. This chain is Regulatory protein VirG (virG), found in Rhizobium rhizogenes (Agrobacterium rhizogenes).